Reading from the N-terminus, the 154-residue chain is MSMHPALRLLATVLVALGAGPAFTQDAPRLTGADRPMSEVAAPPLPETITDDRRVGRNYPEQPPVIPHAIEGYQLSVNANRCLECHRRQYSGLVAAPMISITHFQDREGQMLADVSPRRYFCTACHVPQTNAQPLVTNEFRDMLTLTPASNEAE.

An N-terminal signal peptide occupies residues 1–24 (MSMHPALRLLATVLVALGAGPAFT). A disordered region spans residues 27 to 47 (APRLTGADRPMSEVAAPPLPE). Positions 68, 82, 85, 86, 103, 122, 125, and 126 each coordinate heme c.

Belongs to the NapB family. In terms of assembly, component of the periplasmic nitrate reductase NapAB complex composed of NapA and NapB. Post-translationally, binds 2 heme C groups per subunit.

It localises to the periplasm. Its function is as follows. Electron transfer subunit of the periplasmic nitrate reductase complex NapAB. Receives electrons from the membrane-anchored tetraheme c-type NapC protein and transfers these to NapA subunit, thus allowing electron flow between membrane and periplasm. Essential for periplasmic nitrate reduction with nitrate as the terminal electron acceptor. The sequence is that of Periplasmic nitrate reductase, electron transfer subunit from Cereibacter sphaeroides (Rhodobacter sphaeroides).